Reading from the N-terminus, the 63-residue chain is Cypmaclein (63 aa).

This sequence belongs to the GASA family. In terms of tissue distribution, expressed in pollen (at protein level).

This chain is Cypmaclein, found in Juniperus ashei (Ozark white cedar).